A 373-amino-acid chain; its full sequence is MASQNPNLAALSAAGVSVWLDDLSRDRLRSGNLQELIDTKSVVGVTTNPSIFQKALSEGHDYDAQVAELAERGADVDATIRTVTTDDVRNACDVLAPRWEASGGVDGRVSIEVDPRLAHETDKTIQQAVELWKIVDRPNLLIKIPATKAGLPAIAAVLAEGISVNVTLIFSVDRHRGVMDAYLTGMEKAAQAGHDLSKIHSVASFFVSRVDTEIDNRLEQIGSAEALALRGQAGVANARLAYAAYQEVFEGDARYQALKERGARVQRPLWASTGVKNPDYSDTLYVTELVAPHTVNTMPEKTLDAVADHGVVKGDSITGTSGDAQQVFDKLEAIGIDLSDVFDVLESEGVEKFEASWKELLDATQAQLDALAK.

Lys-143 serves as the catalytic Schiff-base intermediate with substrate.

The protein belongs to the transaldolase family. Type 2 subfamily.

It localises to the cytoplasm. It catalyses the reaction D-sedoheptulose 7-phosphate + D-glyceraldehyde 3-phosphate = D-erythrose 4-phosphate + beta-D-fructose 6-phosphate. The protein operates within carbohydrate degradation; pentose phosphate pathway; D-glyceraldehyde 3-phosphate and beta-D-fructose 6-phosphate from D-ribose 5-phosphate and D-xylulose 5-phosphate (non-oxidative stage): step 2/3. Transaldolase is important for the balance of metabolites in the pentose-phosphate pathway. The sequence is that of Transaldolase from Mycobacterium marinum (strain ATCC BAA-535 / M).